The sequence spans 149 residues: 3-dehydroquinate dehydratase (149 aa).

Tyr23 serves as the catalytic Proton acceptor. 3 residues coordinate substrate: Asn74, His80, and Asp87. Catalysis depends on His100, which acts as the Proton donor. Substrate contacts are provided by residues 101 to 102 (LS) and Arg111.

The protein belongs to the type-II 3-dehydroquinase family. As to quaternary structure, homododecamer.

The enzyme catalyses 3-dehydroquinate = 3-dehydroshikimate + H2O. Its pathway is metabolic intermediate biosynthesis; chorismate biosynthesis; chorismate from D-erythrose 4-phosphate and phosphoenolpyruvate: step 3/7. In terms of biological role, catalyzes a trans-dehydration via an enolate intermediate. The protein is 3-dehydroquinate dehydratase of Ruegeria pomeroyi (strain ATCC 700808 / DSM 15171 / DSS-3) (Silicibacter pomeroyi).